The sequence spans 742 residues: 5-methyltetrahydropteroyltriglutamate--homocysteine methyltransferase (742 aa).

5-methyltetrahydropteroyltri-L-glutamate contacts are provided by residues 18–21 and Lys112; that span reads REWK. L-homocysteine is bound by residues 420–422 and Glu473; that span reads IGS. L-methionine is bound by residues 420-422 and Glu473; that span reads IGS. Residue Trp550 coordinates 5-methyltetrahydropteroyltri-L-glutamate. Asp588 contributes to the L-homocysteine binding site. Residue Asp588 coordinates L-methionine. Glu594 provides a ligand contact to 5-methyltetrahydropteroyltri-L-glutamate. 3 residues coordinate Zn(2+): His630, Cys632, and Glu654. Catalysis depends on His683, which acts as the Proton donor. Zn(2+) is bound at residue Cys715.

This sequence belongs to the vitamin-B12 independent methionine synthase family. Zn(2+) serves as cofactor.

It catalyses the reaction 5-methyltetrahydropteroyltri-L-glutamate + L-homocysteine = tetrahydropteroyltri-L-glutamate + L-methionine. It functions in the pathway amino-acid biosynthesis; L-methionine biosynthesis via de novo pathway; L-methionine from L-homocysteine (MetE route): step 1/1. Its function is as follows. Catalyzes the transfer of a methyl group from 5-methyltetrahydrofolate to homocysteine resulting in methionine formation. This is 5-methyltetrahydropteroyltriglutamate--homocysteine methyltransferase from Staphylococcus aureus (strain Mu3 / ATCC 700698).